The sequence spans 156 residues: SCP2 sterol-binding domain-containing protein 1 (156 aa).

An SCP2 domain is found at 44–156; that stretch reads SFPVFQDIRL…ERVFKDWAKF (113 aa).

The protein is SCP2 sterol-binding domain-containing protein 1 (SCP2D1) of Homo sapiens (Human).